The chain runs to 296 residues: 4-diphosphocytidyl-2-C-methyl-D-erythritol kinase (296 aa).

Lys11 is a catalytic residue. Position 95 to 105 (95 to 105 (PVAAGMAGGSS)) interacts with ATP. Asp137 is a catalytic residue.

This sequence belongs to the GHMP kinase family. IspE subfamily.

The catalysed reaction is 4-CDP-2-C-methyl-D-erythritol + ATP = 4-CDP-2-C-methyl-D-erythritol 2-phosphate + ADP + H(+). It functions in the pathway isoprenoid biosynthesis; isopentenyl diphosphate biosynthesis via DXP pathway; isopentenyl diphosphate from 1-deoxy-D-xylulose 5-phosphate: step 3/6. Its function is as follows. Catalyzes the phosphorylation of the position 2 hydroxy group of 4-diphosphocytidyl-2C-methyl-D-erythritol. The protein is 4-diphosphocytidyl-2-C-methyl-D-erythritol kinase of Clostridioides difficile (strain 630) (Peptoclostridium difficile).